We begin with the raw amino-acid sequence, 244 residues long: 3-deoxy-manno-octulosonate cytidylyltransferase (244 aa).

The protein belongs to the KdsB family.

It localises to the cytoplasm. The catalysed reaction is 3-deoxy-alpha-D-manno-oct-2-ulosonate + CTP = CMP-3-deoxy-beta-D-manno-octulosonate + diphosphate. The protein operates within nucleotide-sugar biosynthesis; CMP-3-deoxy-D-manno-octulosonate biosynthesis; CMP-3-deoxy-D-manno-octulosonate from 3-deoxy-D-manno-octulosonate and CTP: step 1/1. It functions in the pathway bacterial outer membrane biogenesis; lipopolysaccharide biosynthesis. Activates KDO (a required 8-carbon sugar) for incorporation into bacterial lipopolysaccharide in Gram-negative bacteria. This chain is 3-deoxy-manno-octulosonate cytidylyltransferase, found in Rickettsia bellii (strain OSU 85-389).